A 72-amino-acid polypeptide reads, in one-letter code: uncharacterized protein (72 aa).

2 consecutive transmembrane segments (helical) span residues 15-35 and 50-70; these read WEILVYILVVGFGFALFIGSI and ILIYVSCKFVFLIWISLMYFI.

The protein resides in the host membrane. This is an uncharacterized protein from Spiroplasma melliferum (SpV1).